The following is a 985-amino-acid chain: P3N-PIPO polyprotein (985 aa).

Positions 144 to 287 (TFRDGHMNKF…MATVTHMEQY (144 aa)) constitute a Peptidase S30 domain. Active-site for P1 proteinase activity residues include histidine 195, aspartate 204, and serine 238. The Involved in interaction with stylet and aphid transmission signature appears at 337 to 340 (KLTC). The Involved in virions binding and aphid transmission motif lies at 595 to 597 (PTK). Positions 621 to 743 (LYIALDGYCY…ESEIKHYRVG (123 aa)) constitute a Peptidase C6 domain. Catalysis depends on for helper component proteinase activity residues cysteine 629 and histidine 702.

It belongs to the potyviridae P3N-PIPO polyprotein family. Interacts (via PIPO domain) with host PCaP1 protein; this interaction may help to anchor the movement complex to the plasma membrane from which the complex could move to the plasmodesmata. In terms of processing, potyviral RNA is expressed as two polyproteins which undergo post-translational proteolytic processing. Genome polyprotein is processed by NIa-pro, P1 and HC-pro proteinases resulting in the production of at least ten individual proteins. P3N-PIPO is cleaved by P1 and HC-pro proteinases resulting in the production of three individual proteins. The P1 proteinase and the HC-pro cleave only their respective C-termini autocatalytically.

The protein localises to the host cell junction. The protein resides in the host plasmodesma. It catalyses the reaction Hydrolyzes a Gly-|-Gly bond at its own C-terminus, commonly in the sequence -Tyr-Xaa-Val-Gly-|-Gly, in the processing of the potyviral polyprotein.. In terms of biological role, required for aphid transmission and also has proteolytic activity. Only cleaves a Gly-Gly dipeptide at its own C-terminus. Interacts with virions and aphid stylets. Acts as a suppressor of RNA-mediated gene silencing, also known as post-transcriptional gene silencing (PTGS), a mechanism of plant viral defense that limits the accumulation of viral RNAs. May have RNA-binding activity. Its function is as follows. Allows efficient cell to cell propagation, by bypassing the host cell wall barrier. Transports viral genome to neighboring plant cells directly through plasmosdesmata, without any budding. This Pepper mottle virus (isolate California) (PeMV) protein is P3N-PIPO polyprotein.